The primary structure comprises 467 residues: Congo red hypersensitive protein 2 (467 aa).

Residues 1–23 (MAIVNSWLICLVSIFSFVVRVEA) form the signal peptide. Asparagine 28 carries N-linked (GlcNAc...) asparagine glycosylation. Cysteines 56 and 67 form a disulfide. The GH16 domain maps to 63–280 (SHDSCMPVPI…WSGGEINWDA (218 aa)). N-linked (GlcNAc...) asparagine glycosylation occurs at asparagine 96. The active-site Nucleophile is glutamate 166. Catalysis depends on glutamate 170, which acts as the Proton donor. Position 170 (glutamate 170) interacts with chitin. Asparagine 190, asparagine 196, asparagine 233, and asparagine 237 each carry an N-linked (GlcNAc...) asparagine glycan. Tryptophan 257 lines the chitin pocket. Asparagine 261 carries an N-linked (GlcNAc...) asparagine glycan. Threonine 268 provides a ligand contact to chitin. N-linked (GlcNAc...) asparagine glycosylation is found at asparagine 297 and asparagine 310. The disordered stretch occupies residues 337–444 (MDSDEGSGLD…SSSTSSMSGN (108 aa)). The segment covering 351-444 (ATTSSTQKSS…SSSTSSMSGN (94 aa)) has biased composition (low complexity). Asparagine 445 carries GPI-anchor amidated asparagine lipidation. Residues 446–467 (AGANVAANWRLTVLCVILGYVL) constitute a propeptide, removed in mature form.

Belongs to the glycosyl hydrolase 16 family. CRH1 subfamily. The GPI-anchor is attached to the protein in the endoplasmic reticulum and serves to target the protein to the cell surface. There, the glucosamine-inositol phospholipid moiety is cleaved off and the GPI-modified mannoprotein is covalently attached via its lipidless GPI glycan remnant to the 1,6-beta-glucan of the outer cell wall layer.

Its subcellular location is the secreted. The protein resides in the cell wall. It is found in the membrane. The enzyme catalyses Random endo-hydrolysis of N-acetyl-beta-D-glucosaminide (1-&gt;4)-beta-linkages in chitin and chitodextrins.. In terms of biological role, dual chitinase/transglycosylase that plays a role in cell wall architecture. Chitinase and transglycosylase activities are coupled. Required for the polysaccharide cross-linking at the septa and the cell wall. More specifically, transfers chitin to both beta(1-3)- and beta(1-6)glucan in the cell wall. The minimal number of intact hexopyranose units required in the molecule of the acceptor oligosaccharide is two and the effectivity of the acceptor increased with the increasing length of its oligosaccharide chain. This is Congo red hypersensitive protein 2 from Saccharomyces cerevisiae (strain ATCC 204508 / S288c) (Baker's yeast).